A 322-amino-acid chain; its full sequence is HPr kinase/phosphorylase (322 aa).

Catalysis depends on residues His-146 and Lys-167. Position 161–168 (161–168 (GDSGLGKS)) interacts with ATP. Ser-168 lines the Mg(2+) pocket. Asp-185 (proton acceptor; for phosphorylation activity. Proton donor; for dephosphorylation activity) is an active-site residue. Residues 209-218 (LEVRGLGLLD) form an important for the catalytic mechanism of both phosphorylation and dephosphorylation region. Glu-210 is a Mg(2+) binding site. The active site involves Arg-250. The segment at 271–276 (QVAAGR) is important for the catalytic mechanism of dephosphorylation.

The protein belongs to the HPrK/P family. In terms of assembly, homohexamer. Mg(2+) serves as cofactor.

It carries out the reaction [HPr protein]-L-serine + ATP = [HPr protein]-O-phospho-L-serine + ADP + H(+). It catalyses the reaction [HPr protein]-O-phospho-L-serine + phosphate + H(+) = [HPr protein]-L-serine + diphosphate. Catalyzes the ATP- as well as the pyrophosphate-dependent phosphorylation of a specific serine residue in HPr, a phosphocarrier protein of the phosphoenolpyruvate-dependent sugar phosphotransferase system (PTS). HprK/P also catalyzes the pyrophosphate-producing, inorganic phosphate-dependent dephosphorylation (phosphorolysis) of seryl-phosphorylated HPr (P-Ser-HPr). The polypeptide is HPr kinase/phosphorylase (Burkholderia lata (strain ATCC 17760 / DSM 23089 / LMG 22485 / NCIMB 9086 / R18194 / 383)).